The sequence spans 474 residues: Transcription factor fscB (474 aa).

Disordered stretches follow at residues V114–T153 and G207–P242. Low complexity predominate over residues S120 to S131. Positions H132 to T153 are enriched in polar residues. The span at G207–A221 shows a compositional bias: basic and acidic residues. The segment covering Q222–P240 has biased composition (polar residues).

The protein belongs to the POU transcription factor family. Class-3 subfamily.

Its subcellular location is the nucleus. Transcription factor; part of the fragmented gene cluster that mediates the biosynthesis of fusarochromene, a tryptophan-derived metabolite closely related to a group of mycotoxins including fusarochromanone. The chain is Transcription factor fscB from Fusarium equiseti (Fusarium scirpi).